The chain runs to 670 residues: uncharacterized protein (670 aa).

10 consecutive transmembrane segments (helical) span residues Tyr-23 to Asn-42, Tyr-47 to Leu-69, Leu-76 to Leu-98, Val-118 to Thr-140, Val-153 to Leu-170, Gln-381 to Ala-403, Ser-410 to Val-432, Leu-437 to Leu-454, Phe-461 to Val-483, and Asn-493 to Leu-510.

The protein belongs to the aromatic acid exporter ArAE (TC 2.A.85) family.

The protein resides in the cell membrane. This is an uncharacterized protein from Escherichia coli (strain K12).